Here is a 463-residue protein sequence, read N- to C-terminus: MTTETRSLYSQLPAIDRLLRDSSFLSLRDTYGHTRVVELLRQMLDEAREVIRGSQTLPAWCENWAQEVDARLTKEAQSALRPVINLTGTVLHTNLGRALQAEAAVEAVTKAMRSPVTLEYDLDDAGRGHRDRALAQLLCRITGAEDACIVNNNAAAVLLMLAATASGKEVVVSRGELVEIGGAFRIPDVMRQAGCTLHEVGTTNRTHANDYRQAVNENTALLMKVHTSNYSIQGFTKAIDEAELVALGKELDVPVVTDLGSGSLVDLSQYGLPKEPMPQELIAAGVSLVSFSGDKLLGGPQAGIIVGKKEMIARLQSHPLKRALRADKMTLAALEATLRLYLHPEALSKKLPTLRLLTRSAEVIQIQAQRLQAPLAAHYGAEFAVQVMPCLSQIGSGSLPVDRLPSAALTFTPHDGRGSHLESLAARWRELPVPVIGRIYDGRLWLDLRCLEDEQRFLEMLLK.

Lysine 295 is subject to N6-(pyridoxal phosphate)lysine.

This sequence belongs to the SelA family. In terms of assembly, homodecamer; pentamer of dimers. Binds only one seryl-tRNA(Sec) per dimer. It depends on pyridoxal 5'-phosphate as a cofactor.

The protein localises to the cytoplasm. It catalyses the reaction L-seryl-tRNA(Sec) + selenophosphate + H(+) = L-selenocysteinyl-tRNA(Sec) + phosphate. It participates in aminoacyl-tRNA biosynthesis; selenocysteinyl-tRNA(Sec) biosynthesis; selenocysteinyl-tRNA(Sec) from L-seryl-tRNA(Sec) (bacterial route): step 1/1. Its function is as follows. Converts seryl-tRNA(Sec) to selenocysteinyl-tRNA(Sec) required for selenoprotein biosynthesis. In Escherichia coli (strain SMS-3-5 / SECEC), this protein is L-seryl-tRNA(Sec) selenium transferase.